A 480-amino-acid polypeptide reads, in one-letter code: Glycogen synthase 1 (480 aa).

K15 is an ADP-alpha-D-glucose binding site.

Belongs to the glycosyltransferase 1 family. Bacterial/plant glycogen synthase subfamily.

It catalyses the reaction [(1-&gt;4)-alpha-D-glucosyl](n) + ADP-alpha-D-glucose = [(1-&gt;4)-alpha-D-glucosyl](n+1) + ADP + H(+). The protein operates within glycan biosynthesis; glycogen biosynthesis. In terms of biological role, synthesizes alpha-1,4-glucan chains using ADP-glucose. The chain is Glycogen synthase 1 (glgA1) from Rhizobium meliloti (strain 1021) (Ensifer meliloti).